The chain runs to 231 residues: Orotidine 5'-phosphate decarboxylase (231 aa).

Substrate is bound by residues Asp-11, Lys-33, 60–69, Thr-120, Arg-181, Gln-190, Gly-210, and Arg-211; that span reads DLKFHDIPNT. Catalysis depends on Lys-62, which acts as the Proton donor.

This sequence belongs to the OMP decarboxylase family. Type 1 subfamily. As to quaternary structure, homodimer.

It catalyses the reaction orotidine 5'-phosphate + H(+) = UMP + CO2. It functions in the pathway pyrimidine metabolism; UMP biosynthesis via de novo pathway; UMP from orotate: step 2/2. In terms of biological role, catalyzes the decarboxylation of orotidine 5'-monophosphate (OMP) to uridine 5'-monophosphate (UMP). The sequence is that of Orotidine 5'-phosphate decarboxylase from Vibrio cholerae serotype O1 (strain ATCC 39541 / Classical Ogawa 395 / O395).